Consider the following 256-residue polypeptide: 5'-nucleotidase SurE (256 aa).

Residues aspartate 8, aspartate 9, serine 40, and asparagine 92 each coordinate a divalent metal cation.

The protein belongs to the SurE nucleotidase family. Requires a divalent metal cation as cofactor.

The protein localises to the cytoplasm. It catalyses the reaction a ribonucleoside 5'-phosphate + H2O = a ribonucleoside + phosphate. Functionally, nucleotidase that shows phosphatase activity on nucleoside 5'-monophosphates. The protein is 5'-nucleotidase SurE of Sinorhizobium medicae (strain WSM419) (Ensifer medicae).